The primary structure comprises 225 residues: Polyadenylate-binding protein 2 (225 aa).

The segment covering 1-36 (MADEDISLNEDQLLESMEETNGEQETEIVTETEEEG) has biased composition (acidic residues). Positions 1 to 42 (MADEDISLNEDQLLESMEETNGEQETEIVTETEEEGSMQIDP) are disordered. A coiled-coil region spans residues 14–74 (LESMEETNGE…QSEVDKQMAG (61 aa)). The RRM domain occupies 96–173 (RSVYVGNVDY…RQIKVMSKRT (78 aa)).

It is found in the nucleus. The protein localises to the cytoplasm. Functionally, involved in the 3'-end formation of mRNA precursors (pre-mRNA) by the addition of a poly(A) tail of 200-250 nt to the upstream cleavage product. Stimulates poly(A) polymerase (PAPOLA) conferring processivity on the poly(A) tail elongation reaction and also controls the poly(A) tail length. Increases the affinity of poly(A) polymerase for RNA. Binds to poly(A) and to poly(G) with high affinity. May protect the poly(A) tail from degradation. The protein is Polyadenylate-binding protein 2 of Drosophila pseudoobscura pseudoobscura (Fruit fly).